Reading from the N-terminus, the 89-residue chain is Small ribosomal subunit protein uS15 (89 aa).

The protein belongs to the universal ribosomal protein uS15 family. Part of the 30S ribosomal subunit. Forms a bridge to the 50S subunit in the 70S ribosome, contacting the 23S rRNA.

Its function is as follows. One of the primary rRNA binding proteins, it binds directly to 16S rRNA where it helps nucleate assembly of the platform of the 30S subunit by binding and bridging several RNA helices of the 16S rRNA. Functionally, forms an intersubunit bridge (bridge B4) with the 23S rRNA of the 50S subunit in the ribosome. In Methylorubrum populi (strain ATCC BAA-705 / NCIMB 13946 / BJ001) (Methylobacterium populi), this protein is Small ribosomal subunit protein uS15.